We begin with the raw amino-acid sequence, 529 residues long: Transcription factor kayak (529 aa).

A compositionally biased stretch (polar residues) spans 118–134 (LQGTDSDNSNASWADAQ). Disordered stretches follow at residues 118 to 166 (LQGT…SVNG) and 180 to 239 (NAGR…CRKR). Low complexity-rich tracts occupy residues 142-153 (TDTSSAHTDSTS) and 182-201 (GRGS…TPAR). One can recognise a bZIP domain in the interval 219–282 (EEKRRIRRER…NQLEFFLRAH (64 aa)). Residues 221–240 (KRRIRRERNKQAAARCRKRR) are basic motif. The leucine-zipper stretch occupies residues 247–275 (LTYEVEQLEKKRDGLKKEMETLTDVKNQL). 2 disordered regions span residues 311–390 (AGSC…PMST) and 493–529 (DGGT…LVSL). A compositionally biased stretch (low complexity) spans 315-332 (DSGSSSHHNNNSNDSSNG). A compositionally biased stretch (polar residues) spans 340 to 350 (SLNSTGRSNSP). Ser-349 carries the phosphoserine modification. A compositionally biased stretch (low complexity) spans 363 to 375 (DGGLDSSCLLDQD). Pro residues predominate over residues 376 to 387 (GPPPSKRFPLPP).

This sequence belongs to the bZIP family. Fos subfamily. In terms of assembly, homodimer. Heterodimer with Jra. The kay-Jra heterodimer binds more stably to the AP-1 site than either of the two proteins alone.

It localises to the nucleus. Functionally, developmentally regulated transcription factor AP-1 binds and recognizes the enhancer DNA sequence: 5'-TGA[CG]TCA-3'. May play a role in the function or determination of a particular subset of cells in the developing embryo. Is able to carry out its function either independently of or in conjunction with Jra. The chain is Transcription factor kayak from Drosophila ananassae (Fruit fly).